The following is a 230-amino-acid chain: Cytidylate kinase (230 aa).

12 to 20 provides a ligand contact to ATP; it reads GPSGTGKST.

It belongs to the cytidylate kinase family. Type 1 subfamily.

It localises to the cytoplasm. It carries out the reaction CMP + ATP = CDP + ADP. The catalysed reaction is dCMP + ATP = dCDP + ADP. The protein is Cytidylate kinase of Corynebacterium glutamicum (strain ATCC 13032 / DSM 20300 / JCM 1318 / BCRC 11384 / CCUG 27702 / LMG 3730 / NBRC 12168 / NCIMB 10025 / NRRL B-2784 / 534).